The following is a 500-amino-acid chain: Melanopsin-like (500 aa).

The Extracellular segment spans residues 1-65 (MSHHSSWRGH…TVDVPDHAHY (65 aa)). An N-linked (GlcNAc...) asparagine glycan is attached at Asn-18. Residues 66–86 (IIGSVILIVGITGVIGNALVV) traverse the membrane as a helical segment. Residues 87–101 (YVFCRSRTLRTAGNM) lie on the Cytoplasmic side of the membrane. A helical membrane pass occupies residues 102 to 122 (FIVNLAVADFLMSVTQSPVFF). Over 123–138 (AASLHRRWVFGERPCE) the chain is Extracellular. Cysteines 137 and 215 form a disulfide. A helical membrane pass occupies residues 139-159 (LYAFCGALFGICSMMTLTAIA). Residues 160-182 (ADRCLAITQPLALVSRVSRRKAG) are Cytoplasmic-facing. A helical transmembrane segment spans residues 183 to 203 (AVLVVVWLYSLGWSLPPFFGW). Over 204-232 (SAYVPEGLQTSCSWDYMTFTPSVRAYTIL) the chain is Extracellular. The chain crosses the membrane as a helical span at residues 233 to 253 (LFVFVFFIPLGIIGSCYFAIF). Over 254-286 (QTIRAAGKEIRELDCGETHKVYERMQNEWKMAK) the chain is Cytoplasmic. The helical transmembrane segment at 287 to 307 (VALVVIVLFIISWSPYSVVAL) threads the bilayer. At 308–322 (TATAGYSHFLTPYMN) the chain is on the extracellular side. The chain crosses the membrane as a helical span at residues 323–343 (SVPAVIAKASAIHNPIIYAIT). Lys-330 is subject to N6-(retinylidene)lysine. Topologically, residues 344–500 (HPKYRVAIAR…SDGKALLGGN (157 aa)) are cytoplasmic. The interval 404–428 (RWGKTRLSSASDSDSCWTESEADGS) is disordered. Over residues 409–428 (RLSSASDSDSCWTESEADGS) the composition is skewed to polar residues.

Belongs to the G-protein coupled receptor 1 family. Opsin subfamily. As to expression, expressed in a subset of retinal horizontal cells.

It is found in the cell membrane. In terms of biological role, photoreceptor implicated in non-image-forming responses to light. The polypeptide is Melanopsin-like (opn4l) (Danio rerio (Zebrafish)).